A 571-amino-acid chain; its full sequence is External alternative NAD(P)H-ubiquinone oxidoreductase B1, mitochondrial (571 aa).

Residues 1–35 constitute a mitochondrion transit peptide; that stretch reads MTLLSSLGRASRSAPLASKLLLLGTLSGGSIVAYA. Residue 51–81 coordinates FAD; the sequence is KVVVLGTGWAGISFLKDLDITSYDVQVVSPQ. Position 215-251 (215-251) interacts with NAD(+); that stretch reads LHFVIVGGGPTGVEFAAELHDFIIEDITKIYPSVKEL. The 36-residue stretch at 372–407 folds into the EF-hand domain; sequence KILGDIANIFKAADADNSGTLTMEELEGVVDDIIVR. Ca(2+) is bound by residues Asp385, Asp387, Ser389, Thr391, and Glu396. The Microbody targeting signal motif lies at 562–571; it reads YIFGRDSSRI.

It belongs to the NADH dehydrogenase family. It depends on FAD as a cofactor. As to expression, expressed in seedlings, roots, cotyledons, leaves, stems, buds and flowers.

It localises to the mitochondrion inner membrane. The protein resides in the peroxisome. The catalysed reaction is a quinone + NADH + H(+) = a quinol + NAD(+). The enzyme catalyses a ubiquinone + NADH + H(+) = a ubiquinol + NAD(+). With respect to regulation, activity is calcium-dependent with a more pronounced effect at higher pH. Functionally, alternative NADH-ubiquinone oxidoreductase which catalyzes the oxidation of mitochondrial NADH does not translocate protons across the inner mitochondrial membrane. Calcium-dependent NAD(P)H dehydrogenase. Binds calcium ions. The sequence is that of External alternative NAD(P)H-ubiquinone oxidoreductase B1, mitochondrial (NDB1) from Arabidopsis thaliana (Mouse-ear cress).